Consider the following 518-residue polypeptide: Glutamate--cysteine ligase (518 aa).

Belongs to the glutamate--cysteine ligase type 1 family. Type 1 subfamily.

It catalyses the reaction L-cysteine + L-glutamate + ATP = gamma-L-glutamyl-L-cysteine + ADP + phosphate + H(+). The protein operates within sulfur metabolism; glutathione biosynthesis; glutathione from L-cysteine and L-glutamate: step 1/2. The sequence is that of Glutamate--cysteine ligase from Escherichia fergusonii (strain ATCC 35469 / DSM 13698 / CCUG 18766 / IAM 14443 / JCM 21226 / LMG 7866 / NBRC 102419 / NCTC 12128 / CDC 0568-73).